Reading from the N-terminus, the 200-residue chain is Recombination protein RecR (200 aa).

The segment at 58–75 (CPDCFCLKTSKTSSCDFC) adopts a C4-type zinc-finger fold. Residues 82-177 (SFLCIVATPK…KISRLALGMP (96 aa)) form the Toprim domain.

The protein belongs to the RecR family.

Its function is as follows. May play a role in DNA repair. It seems to be involved in an RecBC-independent recombinational process of DNA repair. It may act with RecF and RecO. The polypeptide is Recombination protein RecR (Chlamydia muridarum (strain MoPn / Nigg)).